The primary structure comprises 59 residues: Potassium channel toxin alpha-KTx 15.4 (59 aa).

A signal peptide spans 1 to 22 (MKFSSIILLTLLICSMSIFGNC). Gln-23 is subject to Pyrrolidone carboxylic acid. Disulfide bonds link Cys-30–Cys-50, Cys-35–Cys-55, and Cys-39–Cys-57.

In terms of tissue distribution, expressed by the venom gland.

The protein localises to the secreted. Functionally, blocker of A-type voltage-gated potassium channels of cerebellar granular cells. May also inhibit Kv4/KCND when coexpressed with DPP6 or DPP10. The occlusion of the outer entry of the K(+) conducting pore is partially reversible and affects both open and closed channels. It shares the same target in rat brain than BmTX3 (AC Q8I0L5) and AmmTX3 (AC P60208). The chain is Potassium channel toxin alpha-KTx 15.4 from Androctonus australis (Sahara scorpion).